A 151-amino-acid chain; its full sequence is Small ribosomal subunit protein uS15 (151 aa).

Basic residues predominate over residues 1–16 (MPHRSRDKKGRSRSVR). Residues 1 to 20 (MPHRSRDKKGRSRSVRPAHP) are disordered.

It belongs to the universal ribosomal protein uS15 family. As to quaternary structure, part of the 30S ribosomal subunit.

This chain is Small ribosomal subunit protein uS15, found in Pyrobaculum aerophilum (strain ATCC 51768 / DSM 7523 / JCM 9630 / CIP 104966 / NBRC 100827 / IM2).